A 568-amino-acid chain; its full sequence is MPYRMSRQAYAETYGPTVGDRIRLADTELFIQVEQDFTTYGDEVKFGGGKVIRDGMGQSPIANADGAVDLVITNALILDWWGIVKADIGIKDGKIFKIGKAGNPYIQDHVDIIIGPGTEALAGEGMILTAGGIDTHIHFICPQQIEVAIASGITTMIGGGTGPATGTNATTCTPGPWNMYRMLQAADAFPMNLGFLGKGNASQPQGLTEQIFAGAIGLKLHEDWGTTPATIDTCLSVADEYDVQVAIHTDTLNEAGFVEDTIAAFKNRAIHTYHTEGAGGGHAPDIIKVCGQANVLPSSTNPTRPYTVNTLDEHLDMLMVCHHLDPAIAEDVAFAESRIRRETIAAEDILHDLGAFSMIASDSQAMGRVGEVIIRTWQTSHKMKVQRGSLAGDGKADNLRAKRYVAKYTINPAITHGISQYVGSVEAGKLADLCLWRPGFFGVKPEIVIKGGMIAWSQMGDANASIPTPQPVHMRPMFGSFAGARNATSLTFVSQAALERDIPQQLGLRKSAVAVSGTRQLTKQEMKLNDALPHIEVDPETYEVRADGELLTCEPATVLPMAQRYFLF.

The 438-residue stretch at Gly-131–Phe-568 folds into the Urease domain. 3 residues coordinate Ni(2+): His-136, His-138, and Lys-219. Lys-219 carries the post-translational modification N6-carboxylysine. Substrate is bound at residue His-221. Residues His-248 and His-274 each coordinate Ni(2+). Catalysis depends on His-322, which acts as the Proton donor. Asp-362 lines the Ni(2+) pocket.

The protein belongs to the metallo-dependent hydrolases superfamily. Urease alpha subunit family. As to quaternary structure, heterotrimer of UreA (gamma), UreB (beta) and UreC (alpha) subunits. Three heterotrimers associate to form the active enzyme. The cofactor is Ni cation. Post-translationally, carboxylation allows a single lysine to coordinate two nickel ions.

The protein localises to the cytoplasm. It catalyses the reaction urea + 2 H2O + H(+) = hydrogencarbonate + 2 NH4(+). Its pathway is nitrogen metabolism; urea degradation; CO(2) and NH(3) from urea (urease route): step 1/1. The sequence is that of Urease subunit alpha from Trichormus variabilis (strain ATCC 29413 / PCC 7937) (Anabaena variabilis).